A 174-amino-acid polypeptide reads, in one-letter code: tRNA (cytidine(56)-2'-O)-methyltransferase (174 aa).

S-adenosyl-L-methionine is bound by residues Leu80, Gly105–Val109, and Ile123–Glu130.

Belongs to the aTrm56 family. As to quaternary structure, homodimer.

It localises to the cytoplasm. It catalyses the reaction cytidine(56) in tRNA + S-adenosyl-L-methionine = 2'-O-methylcytidine(56) in tRNA + S-adenosyl-L-homocysteine + H(+). In terms of biological role, specifically catalyzes the AdoMet-dependent 2'-O-ribose methylation of cytidine at position 56 in tRNAs. This is tRNA (cytidine(56)-2'-O)-methyltransferase from Metallosphaera sedula (strain ATCC 51363 / DSM 5348 / JCM 9185 / NBRC 15509 / TH2).